A 246-amino-acid polypeptide reads, in one-letter code: Transcription factor MYB13 (246 aa).

HTH myb-type domains follow at residues 9–61 (KIGL…INYL) and 62–116 (RPDI…KKRL). 2 DNA-binding regions (H-T-H motif) span residues 37 to 61 (WRAL…INYL) and 89 to 112 (WSAI…HTHL).

As to expression, expressed in roots and flowers. Expressed in shoot apex, axillary buds, at the basis of flowers and branching points of inflorescences.

Its subcellular location is the nucleus. Its function is as follows. Plays a regulatory role in meristem function. Functions as component of a regulatory network controlling the establishment and/or development of the shoot system by the regulation of apical meristem function. May play a role in tolerance to boric acid. The sequence is that of Transcription factor MYB13 from Arabidopsis thaliana (Mouse-ear cress).